An 81-amino-acid chain; its full sequence is Exodeoxyribonuclease 7 small subunit (81 aa).

Positions 60-70 (LVDKDGNEKAL) are enriched in basic and acidic residues. The segment at 60-81 (LVDKDGNEKALDPQNASAPEEE) is disordered.

It belongs to the XseB family. In terms of assembly, heterooligomer composed of large and small subunits.

The protein localises to the cytoplasm. The catalysed reaction is Exonucleolytic cleavage in either 5'- to 3'- or 3'- to 5'-direction to yield nucleoside 5'-phosphates.. Bidirectionally degrades single-stranded DNA into large acid-insoluble oligonucleotides, which are then degraded further into small acid-soluble oligonucleotides. The chain is Exodeoxyribonuclease 7 small subunit from Lactobacillus johnsonii (strain CNCM I-12250 / La1 / NCC 533).